Here is a 214-residue protein sequence, read N- to C-terminus: Adenylate kinase (214 aa).

Residue 10–15 coordinates ATP; sequence GAGKGT. Residues 30 to 59 are NMP; the sequence is STGDMFRAAIKEGTELGKQAKALMDEGKLV. Residues threonine 31, arginine 36, 57–59, 85–88, and glutamine 92 contribute to the AMP site; these read KLV and GFPR. Positions 122–159 are LID; the sequence is GRRVHQPSGRTYHVVYNPPKVEGKDDVTGEDLIIRQDD. ATP contacts are provided by residues arginine 123 and 132–133; that span reads TY. AMP-binding residues include arginine 156 and arginine 167. Lysine 200 provides a ligand contact to ATP.

Belongs to the adenylate kinase family. As to quaternary structure, monomer.

The protein resides in the cytoplasm. The catalysed reaction is AMP + ATP = 2 ADP. Its pathway is purine metabolism; AMP biosynthesis via salvage pathway; AMP from ADP: step 1/1. Functionally, catalyzes the reversible transfer of the terminal phosphate group between ATP and AMP. Plays an important role in cellular energy homeostasis and in adenine nucleotide metabolism. The protein is Adenylate kinase of Actinobacillus pleuropneumoniae serotype 5b (strain L20).